Consider the following 131-residue polypeptide: Translation initiation factor 5A (131 aa).

Lys37 is subject to Hypusine.

It belongs to the eIF-5A family.

The protein localises to the cytoplasm. Functionally, functions by promoting the formation of the first peptide bond. This chain is Translation initiation factor 5A (eIF5A), found in Methanococcus maripaludis (strain C5 / ATCC BAA-1333).